A 285-amino-acid chain; its full sequence is MLCNFNLQAKVVLQPLVLFQIIDSYERRPKDATQIIGTLLGRSNGKEITITNCFTVLHKEHPDSARIDLDLGYANDMLELNQLTYPQEKVLGWFSTGKSVSRSALLLHDYYSRECSDGQPLHLLVDATLKGQRLSTRLYCGVEMGVPGGTKGLMFSLVPLEMASDSAEMVALRLMQKQNLQPGAKQVGRILPELVQVVEATRELQLRLDLVLRYINDVLARKRRPDNVVGRALHDTLTSVPLVDTDNFKLMFNANVRDMLMAITLSTMIKTQLQISEKLFAMPDH.

Residues 11–145 (VVLQPLVLFQ…TRLYCGVEMG (135 aa)) enclose the MPN domain.

The protein belongs to the eIF-3 subunit F family. Component of the eukaryotic translation initiation factor 3 (eIF-3) complex. The eIF-3 complex interacts with pix.

It is found in the cytoplasm. In terms of biological role, component of the eukaryotic translation initiation factor 3 (eIF-3) complex, which is involved in protein synthesis of a specialized repertoire of mRNAs and, together with other initiation factors, stimulates binding of mRNA and methionyl-tRNAi to the 40S ribosome. The eIF-3 complex specifically targets and initiates translation of a subset of mRNAs involved in cell proliferation. This is Eukaryotic translation initiation factor 3 subunit F-2 from Drosophila ananassae (Fruit fly).